Reading from the N-terminus, the 364-residue chain is MTSELDIFVGNTTLIDEDVYRLWLDGYSVTDAVALRVRSGILEQTGATAAVLQSDTMDHYRTFHMLERLLHAPPKLLHQLIFQIPPSRQALLIERYYAFDEAFVREVLGKKLSKGTKKDLDDISTKTGITLKSCRRQFDNFKRVFKVVEEMRGSLVDNIQQHFLLSDRLARDYAAIVFFANNRFETGKKKLQYLSFGDFAFCAELMIQNWTLGAVGEAPTDPDSQMDDMDMDLDKEFLQDLKELKVLVADKDLLDLHKSLVCTALRGKLGVFSEMEANFKNLSRGLVNVAAKLTHNKDVRDLFVDLVEKFVEPCRSDHWPLSDVRFFLNQYSASVHSLDGFRHQALWDRYMGTLRGCLLRLYHD.

Threonine 2 carries the N-acetylthreonine modification.

Binds to internalized FGF1; this interaction is increased in the presence of CSNKB, suggesting a possible cooperative interaction between CSNKB and FIBP in binding to FGF1. In terms of tissue distribution, highly expressed in heart, skeletal muscle and pancreas. Expressed at lower levels in brain. Also found in placenta, liver and kidney.

It localises to the nucleus. The protein resides in the endomembrane system. Its function is as follows. May be involved in mitogenic function of FGF1. May mediate with IER2 FGF-signaling in the establishment of laterality in the embryo. The protein is Acidic fibroblast growth factor intracellular-binding protein (FIBP) of Homo sapiens (Human).